The primary structure comprises 181 residues: Protein csk22 (181 aa).

The next 5 helical transmembrane spans lie at 5 to 22 (LQSV…YKKI), 35 to 57 (WLFT…SAIH), 61 to 78 (YGYL…VFFA), 91 to 113 (IYFR…RFLY), and 140 to 162 (LTIG…IIKL).

The protein resides in the cell membrane. In Bacillus subtilis (strain 168), this protein is Protein csk22 (csk22).